The primary structure comprises 258 residues: L-aminoadipate-semialdehyde dehydrogenase-phosphopantetheinyl transferase (258 aa).

It belongs to the P-Pant transferase superfamily. AcpS family.

It localises to the cytoplasm. The protein resides in the nucleus. The enzyme catalyses apo-[ACP] + CoA = holo-[ACP] + adenosine 3',5'-bisphosphate + H(+). In terms of biological role, catalyzes the transfer of a 4'-phosphopantetheine moiety from coenzyme A to a serine residue of acceptor proteins, such as alpha-aminoadipate reductase. Necessary for alpha-aminoadipate reductase activity. This chain is L-aminoadipate-semialdehyde dehydrogenase-phosphopantetheinyl transferase (lys7), found in Schizosaccharomyces pombe (strain 972 / ATCC 24843) (Fission yeast).